Consider the following 141-residue polypeptide: Translation initiation factor 2 subunit beta (141 aa).

This sequence belongs to the eIF-2-beta/eIF-5 family. Heterotrimer composed of an alpha, a beta and a gamma chain.

EIF-2 functions in the early steps of protein synthesis by forming a ternary complex with GTP and initiator tRNA. This is Translation initiation factor 2 subunit beta from Thermofilum pendens (strain DSM 2475 / Hrk 5).